We begin with the raw amino-acid sequence, 212 residues long: Leucyl/phenylalanyl-tRNA--protein transferase (212 aa).

Belongs to the L/F-transferase family.

The protein localises to the cytoplasm. The catalysed reaction is N-terminal L-lysyl-[protein] + L-leucyl-tRNA(Leu) = N-terminal L-leucyl-L-lysyl-[protein] + tRNA(Leu) + H(+). It catalyses the reaction N-terminal L-arginyl-[protein] + L-leucyl-tRNA(Leu) = N-terminal L-leucyl-L-arginyl-[protein] + tRNA(Leu) + H(+). It carries out the reaction L-phenylalanyl-tRNA(Phe) + an N-terminal L-alpha-aminoacyl-[protein] = an N-terminal L-phenylalanyl-L-alpha-aminoacyl-[protein] + tRNA(Phe). Functions in the N-end rule pathway of protein degradation where it conjugates Leu, Phe and, less efficiently, Met from aminoacyl-tRNAs to the N-termini of proteins containing an N-terminal arginine or lysine. The sequence is that of Leucyl/phenylalanyl-tRNA--protein transferase from Allorhizobium ampelinum (strain ATCC BAA-846 / DSM 112012 / S4) (Agrobacterium vitis (strain S4)).